The primary structure comprises 354 residues: MHNELQQKLAVLHKLLQDNKADAILIGSDQNRFWLTGFPSSAGWLVVHKQRVNLFIDGRYFEAAKTAIDPLVKVELFTTYKQVKALCEQVGVKHLLIEGDYLTFNYQNFIKELCAQYTVINAQEIRRQKLPSEILAIEKVVEITRKVAVKLKRFIQPGMTELFIAQWITDQLVKAGGAKNSFDPIVATGKNGANPHHKPSKLKVKSGDFVTCDFGTIYNGYCSDITRTFLVGKKPNNEVLLKAYKKVDEANMAGINAANTQLTGAEVDKVCRDIIEASEFKDYFVHSTGHGVGLDIHEMPNVSTSYNKLLCENAVITIEPGIYIPSVGGIRIEDMVLVKDHKSVWLSAKIPRAF.

The Mn(2+) site is built by Asp213, Asp224, His290, Glu319, and Glu333.

The protein belongs to the peptidase M24B family. Mn(2+) serves as cofactor.

It catalyses the reaction Release of any N-terminal amino acid, including proline, that is linked to proline, even from a dipeptide or tripeptide.. The chain is Putative Xaa-Pro aminopeptidase (pepP) from Mycoplasma pneumoniae (strain ATCC 29342 / M129 / Subtype 1) (Mycoplasmoides pneumoniae).